The chain runs to 341 residues: Adenylosuccinate synthetase (341 aa).

GTP contacts are provided by residues 12–18 (GDEGKGK) and 42–44 (GHS). Asp13 (proton acceptor) is an active-site residue. Residues Asp13 and Gly42 each coordinate Mg(2+). IMP is bound by residues 13–16 (DEGK), 40–43 (NAGH), Thr127, Arg141, Gln179, Thr194, and Arg256. The active-site Proton donor is the His43. Residue 252–258 (VVTGRKR) participates in substrate binding. GTP-binding positions include Arg258, 284-286 (CID), and 324-326 (STG).

It belongs to the adenylosuccinate synthetase family. As to quaternary structure, homodimer. Requires Mg(2+) as cofactor.

It is found in the cytoplasm. It carries out the reaction IMP + L-aspartate + GTP = N(6)-(1,2-dicarboxyethyl)-AMP + GDP + phosphate + 2 H(+). It participates in purine metabolism; AMP biosynthesis via de novo pathway; AMP from IMP: step 1/2. In terms of biological role, plays an important role in the de novo pathway of purine nucleotide biosynthesis. Catalyzes the first committed step in the biosynthesis of AMP from IMP. The sequence is that of Adenylosuccinate synthetase from Methanosphaera stadtmanae (strain ATCC 43021 / DSM 3091 / JCM 11832 / MCB-3).